Consider the following 203-residue polypeptide: Small ribosomal subunit protein uS4 (203 aa).

An S4 RNA-binding domain is found at 93-155 (RRLDSIVYRL…SKNLQQIRDA (63 aa)).

The protein belongs to the universal ribosomal protein uS4 family. In terms of assembly, part of the 30S ribosomal subunit. Contacts protein S5. The interaction surface between S4 and S5 is involved in control of translational fidelity.

One of the primary rRNA binding proteins, it binds directly to 16S rRNA where it nucleates assembly of the body of the 30S subunit. Its function is as follows. With S5 and S12 plays an important role in translational accuracy. The chain is Small ribosomal subunit protein uS4 from Lactobacillus acidophilus (strain ATCC 700396 / NCK56 / N2 / NCFM).